Here is a 523-residue protein sequence, read N- to C-terminus: NAD(P)H-quinone oxidoreductase subunit 2 (523 aa).

13 consecutive transmembrane segments (helical) span residues 29–49 (AVLPEGAVLLAMIATLLVDLA), 57–77 (WVPPICYIGLGSALVLLALQW), 94–114 (LAVAFRAVIATSTLLSLLISW), 132–152 (LAATLGAMLLCGATDLVSIFI), 182–202 (LLVGSAAAAVFLYGASLLYGL), 221–241 (PIAALSLVFVLATVAFKIAAV), 255–275 (PTPVVAFLSVGSKAAGFALAL), 291–311 (LLFTVLAVLSMTLGNVVALAQ), 317–337 (MLAYSSIGQAGFVMIGMVCGT), 345–365 (VLYMAAYLFMNLGAFACIILF), 389–409 (LGLSLCLLSLGGIPPMLGFFG), 424–444 (LLVVVGLITSVISIYYYISVI), and 477–497 (VALIGCVGVTAIGGILSNPLF).

It belongs to the complex I subunit 2 family. NDH-1 can be composed of about 15 different subunits; different subcomplexes with different compositions have been identified which probably have different functions.

The protein localises to the cellular thylakoid membrane. The enzyme catalyses a plastoquinone + NADH + (n+1) H(+)(in) = a plastoquinol + NAD(+) + n H(+)(out). The catalysed reaction is a plastoquinone + NADPH + (n+1) H(+)(in) = a plastoquinol + NADP(+) + n H(+)(out). NDH-1 shuttles electrons from an unknown electron donor, via FMN and iron-sulfur (Fe-S) centers, to quinones in the respiratory and/or the photosynthetic chain. The immediate electron acceptor for the enzyme in this species is believed to be plastoquinone. Couples the redox reaction to proton translocation, and thus conserves the redox energy in a proton gradient. Cyanobacterial NDH-1 also plays a role in inorganic carbon-concentration. This Synechococcus sp. (strain CC9902) protein is NAD(P)H-quinone oxidoreductase subunit 2.